The sequence spans 142 residues: ATP synthase epsilon chain, chloroplastic (142 aa).

It belongs to the ATPase epsilon chain family. F-type ATPases have 2 components, CF(1) - the catalytic core - and CF(0) - the membrane proton channel. CF(1) has five subunits: alpha(3), beta(3), gamma(1), delta(1), epsilon(1). CF(0) has three main subunits: a, b and c.

Its subcellular location is the plastid. The protein localises to the chloroplast thylakoid membrane. Functionally, produces ATP from ADP in the presence of a proton gradient across the membrane. The chain is ATP synthase epsilon chain, chloroplastic from Ostreococcus tauri.